Consider the following 358-residue polypeptide: Membrane-bound lytic murein transglycosylase C (358 aa).

The first 19 residues, 1-19 (MKITLKKLLILAIVPFLYA), serve as a signal peptide directing secretion. A lipid anchor (N-palmitoyl cysteine) is attached at C20. A lipid anchor (S-diacylglycerol cysteine) is attached at C20.

The protein belongs to the transglycosylase Slt family.

The protein localises to the cell outer membrane. It carries out the reaction Exolytic cleavage of the (1-&gt;4)-beta-glycosidic linkage between N-acetylmuramic acid (MurNAc) and N-acetylglucosamine (GlcNAc) residues in peptidoglycan, from either the reducing or the non-reducing ends of the peptidoglycan chains, with concomitant formation of a 1,6-anhydrobond in the MurNAc residue.. Functionally, murein-degrading enzyme. May play a role in recycling of muropeptides during cell elongation and/or cell division. This is Membrane-bound lytic murein transglycosylase C from Actinobacillus succinogenes (strain ATCC 55618 / DSM 22257 / CCUG 43843 / 130Z).